Consider the following 225-residue polypeptide: 7-carboxy-7-deazaguanine synthase (225 aa).

Substrate contacts are provided by residues 14 to 16 (LQG) and Arg-29. The region spanning 20–225 (HFGKSAFFIR…LQTHKWLGVL (206 aa)) is the Radical SAM core domain. [4Fe-4S] cluster is bound by residues Cys-33, Cys-37, and Cys-40. Thr-42 contacts Mg(2+). Thr-77 is a substrate binding site. Residues Gly-79 and 127–129 (SPK) contribute to the S-adenosyl-L-methionine site.

Belongs to the radical SAM superfamily. 7-carboxy-7-deazaguanine synthase family. In terms of assembly, homodimer. It depends on [4Fe-4S] cluster as a cofactor. S-adenosyl-L-methionine is required as a cofactor. Requires Mg(2+) as cofactor.

The catalysed reaction is 6-carboxy-5,6,7,8-tetrahydropterin + H(+) = 7-carboxy-7-deazaguanine + NH4(+). The protein operates within purine metabolism; 7-cyano-7-deazaguanine biosynthesis. Functionally, catalyzes the complex heterocyclic radical-mediated conversion of 6-carboxy-5,6,7,8-tetrahydropterin (CPH4) to 7-carboxy-7-deazaguanine (CDG), a step common to the biosynthetic pathways of all 7-deazapurine-containing compounds. The sequence is that of 7-carboxy-7-deazaguanine synthase from Prochlorococcus marinus (strain SARG / CCMP1375 / SS120).